Reading from the N-terminus, the 437-residue chain is Purple acid phosphatase 21 (437 aa).

Residues 1–25 (MKKMKIFGFLISFSLFFLSPFVCQA) form the signal peptide. N-linked (GlcNAc...) asparagine glycosylation is present at Asn-30. Fe cation is bound by residues Asp-152, Asp-179, and Tyr-182. Asp-179 is a binding site for Zn(2+). Asn-212 and His-296 together coordinate Zn(2+). Asn-212 contributes to the substrate binding site. His-306 (proton donor) is an active-site residue. His-333 contacts Zn(2+). Position 333–335 (333–335 (HVH)) interacts with substrate. Position 335 (His-335) interacts with Fe cation.

It belongs to the metallophosphoesterase superfamily. Purple acid phosphatase family. As to quaternary structure, homodimer. The cofactor is Fe cation. It depends on Zn(2+) as a cofactor. As to expression, expressed flowers and siliques.

Its subcellular location is the secreted. It catalyses the reaction a phosphate monoester + H2O = an alcohol + phosphate. The protein is Purple acid phosphatase 21 (PAP21) of Arabidopsis thaliana (Mouse-ear cress).